We begin with the raw amino-acid sequence, 138 residues long: Histone H2B.4 (138 aa).

Over residues Met1–Glu39 the composition is skewed to basic and acidic residues. The interval Met1–Ser48 is disordered. At Ala2 the chain carries N,N,N-trimethylalanine; alternate. A N,N-dimethylalanine; alternate modification is found at Ala2. Ala2 carries the post-translational modification N-methylalanine; alternate. Lys4 is modified (N6-methyllysine). Residues Lys8 and Lys13 each carry the N6-acetyllysine modification. Lys14 is subject to N6,N6-dimethyllysine. An N6-acetyllysine mark is found at Lys18, Lys23, Lys29, and Lys30. Lys135 is covalently cross-linked (Glycyl lysine isopeptide (Lys-Gly) (interchain with G-Cter in ubiquitin)).

The protein belongs to the histone H2B family. As to quaternary structure, the nucleosome is a histone octamer containing two molecules each of H2A, H2B, H3 and H4 assembled in one H3-H4 heterotetramer and two H2A-H2B heterodimers. The octamer wraps approximately 147 bp of DNA. In terms of processing, can be acetylated to form H2BK6ac, H2BK33ac and H2BK34ac. Monoubiquitinated by BRE1 to form H2BK143ub1 and deubiquitinated by UBP26. Required for heterochromatic histone H3 di- and trimethylation at H3K4me. May give a specific tag for epigenetic transcriptional activation.

Its subcellular location is the nucleus. It is found in the chromosome. In terms of biological role, core component of nucleosome. Nucleosomes wrap and compact DNA into chromatin, limiting DNA accessibility to the cellular machineries which require DNA as a template. Histones thereby play a central role in transcription regulation, DNA repair, DNA replication and chromosomal stability. DNA accessibility is regulated via a complex set of post-translational modifications of histones, also called histone code, and nucleosome remodeling. The chain is Histone H2B.4 from Arabidopsis thaliana (Mouse-ear cress).